Consider the following 187-residue polypeptide: Large ribosomal subunit protein uL22 (187 aa).

Basic and acidic residues predominate over residues 159 to 171 (VSKPTDDAAPKVK). Residues 159-187 (VSKPTDDAAPKVKKESKRKQRRQLARGEF) form a disordered region. Residues 172-187 (KESKRKQRRQLARGEF) show a composition bias toward basic residues.

It belongs to the universal ribosomal protein uL22 family.

The sequence is that of Large ribosomal subunit protein uL22 (rpl-17) from Caenorhabditis elegans.